Consider the following 433-residue polypeptide: 28S rRNA (cytosine-C(5))-methyltransferase (433 aa).

Residues 235–241 (CAAPGMK), Glu-259, Asp-286, and Asp-304 each bind S-adenosyl-L-methionine. The Nucleophile role is filled by Cys-357.

Belongs to the class I-like SAM-binding methyltransferase superfamily. RsmB/NOP family.

The catalysed reaction is a cytidine in 28S rRNA + S-adenosyl-L-methionine = a 5-methylcytidine in 28S rRNA + S-adenosyl-L-homocysteine + H(+). S-adenosyl-L-methionine-dependent methyltransferase that specifically methylates the C(5) position of a cytosine in 28S rRNA. The protein is 28S rRNA (cytosine-C(5))-methyltransferase of Drosophila melanogaster (Fruit fly).